We begin with the raw amino-acid sequence, 170 residues long: 4-hydroxyphenylacetate 3-monooxygenase reductase component (170 aa).

The protein belongs to the non-flavoprotein flavin reductase family. HpaC subfamily. In terms of assembly, homodimer. 4-HPA 3-monooxygenase consists of a reductase component HpaC and an oxygenase component HpaB.

The catalysed reaction is a reduced flavin + NAD(+) = an oxidized flavin + NADH + 2 H(+). Its pathway is aromatic compound metabolism; 4-hydroxyphenylacetate degradation; pyruvate and succinate semialdehyde from 4-hydroxyphenylacetate: step 1/7. Its function is as follows. Catalyzes the reduction of free flavins (FMN, FAD and riboflavin) by NADH. Subsequently, the reduced flavins diffuse to the large HpaB component or to other electron acceptors such as cytochrome c and Fe(3+) ion. The sequence is that of 4-hydroxyphenylacetate 3-monooxygenase reductase component (hpaC) from Escherichia coli.